The primary structure comprises 87 residues: Small ribosomal subunit protein eS21 (87 aa).

Met-1 carries the N-acetylmethionine modification.

Belongs to the eukaryotic ribosomal protein eS21 family. As to quaternary structure, component of the small ribosomal subunit (SSU). Mature yeast ribosomes consist of a small (40S) and a large (60S) subunit. The 40S small subunit contains 1 molecule of ribosomal RNA (18S rRNA) and at least 33 different proteins. The large 60S subunit contains 3 rRNA molecules (25S, 5.8S and 5S rRNA) and at least 46 different proteins. Interacts with uS2A and uS2B, strongest interaction is with uS2B.

It localises to the cytoplasm. It is found in the nucleus. Its function is as follows. Component of the ribosome, a large ribonucleoprotein complex responsible for the synthesis of proteins in the cell. The small ribosomal subunit (SSU) binds messenger RNAs (mRNAs) and translates the encoded message by selecting cognate aminoacyl-transfer RNA (tRNA) molecules. The large subunit (LSU) contains the ribosomal catalytic site termed the peptidyl transferase center (PTC), which catalyzes the formation of peptide bonds, thereby polymerizing the amino acids delivered by tRNAs into a polypeptide chain. The nascent polypeptides leave the ribosome through a tunnel in the LSU and interact with protein factors that function in enzymatic processing, targeting, and the membrane insertion of nascent chains at the exit of the ribosomal tunnel. eS21 is required for the processing of the 20S rRNA-precursor to mature 18S rRNA in a late step of the maturation of 40S ribosomal subunits. Has a physiological role leading to 18S rRNA stability. The polypeptide is Small ribosomal subunit protein eS21 (rps21) (Schizosaccharomyces pombe (strain 972 / ATCC 24843) (Fission yeast)).